Consider the following 427-residue polypeptide: Glutamate-1-semialdehyde 2,1-aminomutase 2 (427 aa).

K267 is modified (N6-(pyridoxal phosphate)lysine).

It belongs to the class-III pyridoxal-phosphate-dependent aminotransferase family. HemL subfamily. As to quaternary structure, homodimer. Pyridoxal 5'-phosphate serves as cofactor.

It localises to the cytoplasm. It catalyses the reaction (S)-4-amino-5-oxopentanoate = 5-aminolevulinate. Its pathway is porphyrin-containing compound metabolism; protoporphyrin-IX biosynthesis; 5-aminolevulinate from L-glutamyl-tRNA(Glu): step 2/2. This is Glutamate-1-semialdehyde 2,1-aminomutase 2 from Staphylococcus saprophyticus subsp. saprophyticus (strain ATCC 15305 / DSM 20229 / NCIMB 8711 / NCTC 7292 / S-41).